Here is a 332-residue protein sequence, read N- to C-terminus: L-lactate dehydrogenase A chain (332 aa).

At Ala2 the chain carries N-acetylalanine. Lys5 is subject to N6-acetyllysine; alternate. N6-succinyllysine; alternate is present on Lys5. Position 14 is an N6-acetyllysine (Lys14). Residue Thr18 is modified to Phosphothreonine. Position 29–57 (29–57) interacts with NAD(+); it reads GAVGMACAISILMKDLADELALVDVIEDK. Position 57 is an N6-acetyllysine; alternate (Lys57). Residue Lys57 forms a Glycyl lysine isopeptide (Lys-Gly) (interchain with G-Cter in SUMO2); alternate linkage. An N6-acetyllysine modification is found at Lys81. Arg99 contacts NAD(+). Arg106 contributes to the substrate binding site. Lys118 carries the N6-acetyllysine; alternate modification. An N6-succinyllysine; alternate modification is found at Lys118. At Lys126 the chain carries N6-acetyllysine. Residues Asn138 and Arg169 each coordinate substrate. His193 functions as the Proton acceptor in the catalytic mechanism. An N6-acetyllysine mark is found at Lys224 and Lys232. A Phosphotyrosine modification is found at Tyr239. Position 243 is an N6-acetyllysine (Lys243). Position 248 (Thr248) interacts with substrate. Thr309 bears the Phosphothreonine mark. Ser310 carries the post-translational modification Phosphoserine. Lys318 is modified (N6-acetyllysine; alternate). Lys318 is subject to N6-succinyllysine; alternate. Phosphothreonine is present on Thr322.

It belongs to the LDH/MDH superfamily. LDH family. In terms of assembly, homotetramer. Interacts with PTEN upstream reading frame protein MP31. ISGylated.

Its subcellular location is the cytoplasm. It catalyses the reaction (S)-lactate + NAD(+) = pyruvate + NADH + H(+). It participates in fermentation; pyruvate fermentation to lactate; (S)-lactate from pyruvate: step 1/1. Interconverts simultaneously and stereospecifically pyruvate and lactate with concomitant interconversion of NADH and NAD(+). This Pan troglodytes (Chimpanzee) protein is L-lactate dehydrogenase A chain (LDHA).